The sequence spans 90 residues: Small ribosomal subunit protein bS20 (90 aa).

The segment at 1 to 25 (MANSAQARKRARQAAKANSHNSALR) is disordered.

This sequence belongs to the bacterial ribosomal protein bS20 family.

Its function is as follows. Binds directly to 16S ribosomal RNA. This Burkholderia orbicola (strain MC0-3) protein is Small ribosomal subunit protein bS20.